Reading from the N-terminus, the 233-residue chain is tRNA (guanine-N(7)-)-methyltransferase (233 aa).

S-adenosyl-L-methionine is bound by residues glutamate 62, glutamate 87, aspartate 116, and aspartate 138. Residue aspartate 138 is part of the active site. Substrate contacts are provided by residues lysine 142, aspartate 174, and 212–215 (TRYE).

The protein belongs to the class I-like SAM-binding methyltransferase superfamily. TrmB family.

It carries out the reaction guanosine(46) in tRNA + S-adenosyl-L-methionine = N(7)-methylguanosine(46) in tRNA + S-adenosyl-L-homocysteine. It participates in tRNA modification; N(7)-methylguanine-tRNA biosynthesis. Its function is as follows. Catalyzes the formation of N(7)-methylguanine at position 46 (m7G46) in tRNA. The protein is tRNA (guanine-N(7)-)-methyltransferase of Bartonella henselae (strain ATCC 49882 / DSM 28221 / CCUG 30454 / Houston 1) (Rochalimaea henselae).